The primary structure comprises 87 residues: MSRLLLIVLLACSIASAIGVVYMRHMHRKLFVQLSKLEHSRDELNIEFGRLQLEQATWAESNRVDQVSRERIGMKFPETSDIVVIRP.

The Cytoplasmic portion of the chain corresponds to 1-3 (MSR). The chain crosses the membrane as a helical span at residues 4-23 (LLLIVLLACSIASAIGVVYM). At 24–87 (RHMHRKLFVQ…ETSDIVVIRP (64 aa)) the chain is on the periplasmic side.

It belongs to the FtsL family. In terms of assembly, part of a complex composed of FtsB, FtsL and FtsQ.

Its subcellular location is the cell inner membrane. Its function is as follows. Essential cell division protein. May link together the upstream cell division proteins, which are predominantly cytoplasmic, with the downstream cell division proteins, which are predominantly periplasmic. The chain is Cell division protein FtsL from Xanthomonas campestris pv. campestris (strain ATCC 33913 / DSM 3586 / NCPPB 528 / LMG 568 / P 25).